A 384-amino-acid chain; its full sequence is Mitogen-activated protein kinase 8 (384 aa).

In terms of domain architecture, Protein kinase spans 26 to 321 (YQNLRPIGSG…VDEALQHPYI (296 aa)). ATP-binding positions include 33-38 (GSGAQG) and lysine 55. The Proton acceptor role is filled by aspartate 151. The residue at position 183 (threonine 183) is a Phosphothreonine. Positions 183-185 (TPY) match the TXY motif. At tyrosine 185 the chain carries Phosphotyrosine.

The protein belongs to the protein kinase superfamily. CMGC Ser/Thr protein kinase family. MAP kinase subfamily. Mg(2+) is required as a cofactor. In terms of processing, dually phosphorylated on Thr-183 and Tyr-185, which activates the enzyme.

The protein localises to the cytoplasm. It is found in the nucleus. Its subcellular location is the synapse. The enzyme catalyses L-seryl-[protein] + ATP = O-phospho-L-seryl-[protein] + ADP + H(+). It catalyses the reaction L-threonyl-[protein] + ATP = O-phospho-L-threonyl-[protein] + ADP + H(+). Its activity is regulated as follows. Activated by threonine and tyrosine phosphorylation. In terms of biological role, responds to activation by environmental stress and pro-inflammatory cytokines by phosphorylating a number of transcription factors, primarily components of AP-1 such as c-Jun and ATF2 and thus regulates AP-1 transcriptional activity. May play a role in the regulation of the circadian clock. In Danio rerio (Zebrafish), this protein is Mitogen-activated protein kinase 8 (mapk8).